The following is a 750-amino-acid chain: MLCPCRGKLKLLVVSLSFVILFTWLYLLVGNSENGRSLLLSACLVESTEARLLERDVLASRVREVEEENRQIRLQLSQSQGLAGQPAEGNYGNQQWVASADTGPEDVENTAEERANHSECSRSPTAEKCELLHVACVCAGHNASRDVVTLVKSILFHRRNPLHFHFITDTVANQILSTLFQSWMVPSVQVSFYDADELKSEVSWIPNKHYSGIYGLMKLTLTKALPSNLSKVIVLDTDITFATDIAELWAIFRKFTEKQVIGLVENQSDWYLGNLWKNHKPWPALGRGFNTGVILLYLERLRRMGWEQMWRLTAERELMSMLSTSLADQDIFNAFIKQNPVLVHQLPCFWNVQLSDHTRSEQCYTEVSDLKVIHWNSPKKLRVKNKHVEFFRNLYLTFLEYDGNLLRRELFGCPSQASSESTVLQQALEELDEDDQCYDFRRERIMLHRVHLYFLQYEYSPTDDGTDITLVAQLSMDRLQMLEAICKHWEGPISLALYMSDAEAQQFLRYAQASEVLKNRKNVGYHIVYKEGQFYPVNLVRNVALRNVNTPYVFLTDVDFLPMYGLYDYLRKSIVQLDMANTKKALVVPAFETLRYRLSFPKSKAELLSMLDMGTLYTFRYHVWTKGHAPTNYAKWRTATTPYKVEWEADFEPYVVVRRDCPEYDQRFVGFGWNKVSHIMELDAQEYDLIVLPNAFMIHMPHAPSFDISKFRSSPSYRYCLTTLKDEFHQDLSRKYGSAALKYLTAQRNI.

Topologically, residues 1–10 are cytoplasmic; it reads MLCPCRGKLK. A helical; Signal-anchor for type II membrane protein membrane pass occupies residues 11-31; the sequence is LLVVSLSFVILFTWLYLLVGN. The Lumenal portion of the chain corresponds to 32 to 750; the sequence is SENGRSLLLS…LKYLTAQRNI (719 aa). 3 N-linked (GlcNAc...) asparagine glycosylation sites follow: Asn-116, Asn-142, and Asn-228. The tract at residues 132-407 is xylosyltransferase activity; that stretch reads LHVACVCAGH…FLEYDGNLLR (276 aa). Residues Asp-236 and Asp-238 each coordinate Mn(2+). A glycan (N-linked (GlcNAc...) asparagine) is linked at Asn-266. The interval 408-750 is glucuronyltransferase activity; sequence RELFGCPSQA…LKYLTAQRNI (343 aa). Positions 557 and 559 each coordinate Mn(2+).

In the C-terminal section; belongs to the glycosyltransferase 49 family. It in the N-terminal section; belongs to the glycosyltransferase 8 family. Requires Mn(2+) as cofactor.

The protein resides in the golgi apparatus membrane. It carries out the reaction 3-O-[beta-D-GlcA-(1-&gt;3)-beta-D-Xyl-(1-&gt;4)-Rib-ol-P-Rib-ol-P-3-beta-D-GalNAc-(1-&gt;3)-beta-D-GlcNAc-(1-&gt;4)-(O-6-P-alpha-D-Man)]-Thr-[protein] + UDP-alpha-D-xylose = 3-O-[alpha-D-Xyl-(1-&gt;3)-beta-D-GlcA-(1-&gt;4)-beta-D-Xyl-(1-&gt;4)-Rib-ol-P-Rib-ol-P-3-beta-D-GalNAc-(1-&gt;3)-beta-D-GlcNAc-(1-&gt;4)-(O-6-P-alpha-D-Man)]-Thr-[protein] + UDP + H(+). The enzyme catalyses 3-O-{(1-&gt;[3)-alpha-D-Xyl-(1-&gt;3)-beta-D-GlcA-(1-&gt;](n)-4)-beta-D-Xyl-(1-&gt;4)-Rib-ol-P-Rib-ol-P-3-beta-D-GalNAc-(1-&gt;3)-beta-D-GlcNAc-(1-&gt;4)-O-6-P-alpha-D-Man}-L-Thr-[protein] + UDP-alpha-D-glucuronate = 3-O-{beta-D-GlcA-(1-&gt;[3)-alpha-D-Xyl-(1-&gt;3)-beta-D-GlcA-(1-&gt;](n)-4)-beta-D-Xyl-(1-&gt;4)-Rib-ol-P-Rib-ol-P-3-beta-D-GalNAc-(1-&gt;3)-beta-D-GlcNAc-(1-&gt;4)-O-6-P-alpha-D-Man}-L-Thr-[protein] + UDP + H(+). It catalyses the reaction 3-O-{beta-D-GlcA-(1-&gt;[3)-alpha-D-Xyl-(1-&gt;3)-beta-D-GlcA-(1-&gt;](n)-4)-beta-D-Xyl-(1-&gt;4)-Rib-ol-P-Rib-ol-P-3-beta-D-GalNAc-(1-&gt;3)-beta-D-GlcNAc-(1-&gt;4)-O-6-P-alpha-D-Man}-L-Thr-[protein] + UDP-alpha-D-xylose = 3-O-{(1-&gt;[3)-alpha-D-Xyl-(1-&gt;3)-beta-D-GlcA-(1-&gt;](n+1)-4)-beta-D-Xyl-(1-&gt;4)-Rib-ol-P-Rib-ol-P-3-beta-D-GalNAc-(1-&gt;3)-beta-D-GlcNAc-(1-&gt;4)-O-6-P-alpha-D-Man}-L-Thr-[protein] + UDP + H(+). It participates in protein modification; protein glycosylation. Its function is as follows. Bifunctional glycosyltransferase with both alpha-1,3-xylosyltransferase and beta-1,3-glucuronyltransferase activities involved in the maturation of alpha-dystroglycan (DAG1) by glycosylation leading to DAG1 binding to laminin G-like domain-containing extracellular proteins with high affinity and in a phosphorylated-O-mannosyl trisaccharide dependent manner. Elongates the glucuronyl-beta-1,4-xylose-beta disaccharide primer structure by adding repeating units [-3-Xylose-alpha-1,3-GlcA-beta-1-] to produce a heteropolysaccharide. Supports the maturation of DAG1 more effectively than LARGE1. In addition, can modify both heparan sulfate (HS)- and chondroitin/dermatan sulfate (CS/DS)-proteoglycans (PGs), namely GPC4, with a glycosaminoglycan (GAG)-like polysaccharide composed of xylose and glucuronic acid to confer laminin binding. The chain is Xylosyl- and glucuronyltransferase LARGE2s from Danio rerio (Zebrafish).